Here is a 65-residue protein sequence, read N- to C-terminus: Seminal plasma acrosin inhibitor A1 (65 aa).

The Kazal-like domain occupies 1–59 (TRKQPNCNVYRSHLFFCTRQMDPICGTNGKSYANPCIFCSEKGLRNQKFDFGHWGHCRE). 3 disulfide bridges follow: Cys7–Cys39, Cys17–Cys36, and Cys25–Cys57. An O-linked (GalNAc...) serine glycan is attached at Ser12. The O-linked (GalNAc...) serine glycan is linked to Ser62.

Post-translationally, the identity of the O-linked saccharides are not reported in Ref.1. The O-linked polysaccharides on Ser-12 and Ser-62 are probably the mucin type linked to GalNAc. Seminal plasma.

The protein localises to the secreted. Functionally, inhibits acrosin. This chain is Seminal plasma acrosin inhibitor A1, found in Sus scrofa (Pig).